A 693-amino-acid polypeptide reads, in one-letter code: Translation initiation factor IF-2 (693 aa).

One can recognise a tr-type G domain in the interval 181–349; it reads PRPPVVTVMG…MILLVAEMNE (169 aa). The interval 190 to 197 is G1; the sequence is GHVDHGKT. Position 190-197 (190-197) interacts with GTP; the sequence is GHVDHGKT. The interval 215–219 is G2; it reads GITQS. The interval 236 to 239 is G3; sequence DTPG. Residues 236 to 240 and 290 to 293 each bind GTP; these read DTPGH and NKID. The interval 290 to 293 is G4; sequence NKID. A G5 region spans residues 327 to 329; that stretch reads SAR.

It belongs to the TRAFAC class translation factor GTPase superfamily. Classic translation factor GTPase family. IF-2 subfamily.

It localises to the cytoplasm. In terms of biological role, one of the essential components for the initiation of protein synthesis. Protects formylmethionyl-tRNA from spontaneous hydrolysis and promotes its binding to the 30S ribosomal subunits. Also involved in the hydrolysis of GTP during the formation of the 70S ribosomal complex. This Thermotoga petrophila (strain ATCC BAA-488 / DSM 13995 / JCM 10881 / RKU-1) protein is Translation initiation factor IF-2.